The primary structure comprises 334 residues: Delta(1)-pyrroline-2-carboxylate/Delta(1)-piperideine-2-carboxylate reductase (334 aa).

Residue serine 44 is the Charge relay system of the active site. Catalysis depends on histidine 45, which acts as the Proton donor. Position 49 (arginine 49) interacts with substrate. 117-121 (HFSAL) contacts NADP(+). Threonine 157 contributes to the substrate binding site. Position 175-177 (175-177 (DFA)) interacts with NADP(+). 183–184 (RG) lines the substrate pocket. Glutamate 185 (charge relay system) is an active-site residue. Residues 226–227 (HK) and 301–307 (RLPSQRR) contribute to the NADP(+) site.

This sequence belongs to the LDH2/MDH2 oxidoreductase family. As to quaternary structure, homodimer.

It carries out the reaction L-pipecolate + NADP(+) = Delta(1)-piperideine-2-carboxylate + NADPH + H(+). The enzyme catalyses L-proline + NADP(+) = 1-pyrroline-2-carboxylate + NADPH + H(+). The catalysed reaction is cis-4-hydroxy-L-proline + NADP(+) = Delta(1)-pyrroline-(4S)-hydroxy-2-carboxylate + NADPH + 2 H(+). Catalyzes the reduction of both Delta(1)-pyrroline-2-carboxylate (Pyr2C) and Delta(1)-piperideine-2-carboxylate (Pip2C) to L-proline and L-pipecolate, respectively, using NADPH as the electron donor. Cannot use NADH instead of NADPH. Is likely involved in a degradation pathway that converts trans-3-hydroxy-L-proline (t3LHyp) to L-proline, which would allow P.aeruginosa to grow on t3LHyp as a sole carbon source. Can also catalyze the reverse oxidation reactions, albeit at a much lower rate. Is also able to use Delta(1)-pyrroline-(4S)-hydroxy-2-carboxylate (Pyr4SH2C) and cis-4-hydroxy-L-proline (c4LHyp) as substrates, and might be involved in the metabolism of c4LHyp, a compound which is generated by the hydroxylation of free L-proline in bacteria. This chain is Delta(1)-pyrroline-2-carboxylate/Delta(1)-piperideine-2-carboxylate reductase, found in Pseudomonas aeruginosa (strain ATCC 15692 / DSM 22644 / CIP 104116 / JCM 14847 / LMG 12228 / 1C / PRS 101 / PAO1).